A 251-amino-acid polypeptide reads, in one-letter code: UPF0246 protein PEPE_1842 (251 aa).

This sequence belongs to the UPF0246 family.

The chain is UPF0246 protein PEPE_1842 from Pediococcus pentosaceus (strain ATCC 25745 / CCUG 21536 / LMG 10740 / 183-1w).